Reading from the N-terminus, the 240-residue chain is Penton protein H240R (240 aa).

Belongs to the asfivirus H240R family.

The protein resides in the virion. Its function is as follows. Forms the penton at the fivefold vertices of the icosahedral capsid. Together with the minor capsid proteins (p17, p49, and M1249L), forms a complicated network immediately below the outer capsid shell, stabilizing the whole capsid. This African swine fever virus (isolate Tick/South Africa/Pretoriuskop Pr4/1996) (ASFV) protein is Penton protein H240R.